We begin with the raw amino-acid sequence, 487 residues long: GTPase Der (487 aa).

2 EngA-type G domains span residues 3–167 and 203–378; these read FTLA…EGFA and LQIA…DIWN. GTP contacts are provided by residues 9–16, 56–60, 119–122, 209–216, 256–260, and 321–324; these read GRPNVGKS, DTAGL, NKAE, GRPNAGKS, DTAGM, and NKWD. One can recognise a KH-like domain in the interval 379-463; that stretch reads RRITTARLNT…PIRLTMRGQG (85 aa). The disordered stretch occupies residues 451–487; sequence PGTPIRLTMRGQGDKNPFKERKFRTPSRLRKHLGKKD. Basic residues predominate over residues 471-487; the sequence is RKFRTPSRLRKHLGKKD.

It belongs to the TRAFAC class TrmE-Era-EngA-EngB-Septin-like GTPase superfamily. EngA (Der) GTPase family. In terms of assembly, associates with the 50S ribosomal subunit.

Its function is as follows. GTPase that plays an essential role in the late steps of ribosome biogenesis. This chain is GTPase Der, found in Cereibacter sphaeroides (strain ATCC 17029 / ATH 2.4.9) (Rhodobacter sphaeroides).